A 172-amino-acid polypeptide reads, in one-letter code: Type II secretion system protein H (172 aa).

Residues 1-6 (MRASRG) constitute a propeptide, leader sequence. N-methylphenylalanine is present on F7. A helical transmembrane segment spans residues 7 to 27 (FTLIELMVVMVIISVLIGLAV).

The protein belongs to the GSP H family. In terms of assembly, type II secretion is composed of four main components: the outer membrane complex, the inner membrane complex, the cytoplasmic secretion ATPase and the periplasm-spanning pseudopilus. Forms the tip of the type II pseudopilus by interacting with XcpV, XcpW and XcpX. Interacts with core component XcpT. In terms of processing, cleaved by prepilin peptidase. Post-translationally, methylated by prepilin peptidase at the amino group of the N-terminal phenylalanine once the leader sequence is cleaved by prepilin peptidase.

Its subcellular location is the cell inner membrane. In terms of biological role, component of the type II secretion system required for the energy-dependent secretion of extracellular factors such as proteases and toxins from the periplasm. Part of the pseudopilus tip complex that is critical for the recognition and binding of secretion substrates. Type II pseudopilus confers increased bacterial adhesive capabilities. The chain is Type II secretion system protein H (xcpU) from Pseudomonas aeruginosa (strain ATCC 15692 / DSM 22644 / CIP 104116 / JCM 14847 / LMG 12228 / 1C / PRS 101 / PAO1).